Reading from the N-terminus, the 113-residue chain is MVLGKRHGSLIKRTTSMKMITLDTPTIYDASQPSDHLTFHQHPHNPMVVMASNYDDFLKTCSLCNRSLCHHRDIYMYRGNNAFCSLECREKQIKLDEKKAKTGFVTSKKPIRI.

The FLZ-type zinc-finger motif lies at 56 to 100; that stretch reads DFLKTCSLCNRSLCHHRDIYMYRGNNAFCSLECREKQIKLDEKKA.

The protein belongs to the FLZ family. Interacts with KIN10 and KIN11 via its FLZ-type zinc finger domain. Interacts with KINB3 via its N-terminal part. Interacts with GEBP.

The protein resides in the nucleus. It is found in the cytoplasm. In terms of biological role, may act as an adapter to facilitate the interaction of SnRK1 complex with effector proteins, conferring tissue- and stimulus-type specific differences in the SnRK1 regulation pathway. This chain is Protein INCREASED RESISTANCE TO MYZUS PERSICAE 1, found in Arabidopsis thaliana (Mouse-ear cress).